Reading from the N-terminus, the 163-residue chain is Peptidyl-prolyl cis-trans isomerase (163 aa).

A PPIase cyclophilin-type domain is found at 17–163 (KTAYATIKTN…IESVVFSSSL (147 aa)).

This sequence belongs to the cyclophilin-type PPIase family.

It catalyses the reaction [protein]-peptidylproline (omega=180) = [protein]-peptidylproline (omega=0). Functionally, PPIases accelerate the folding of proteins. It catalyzes the cis-trans isomerization of proline imidic peptide bonds in oligopeptides. The sequence is that of Peptidyl-prolyl cis-trans isomerase (ppiA) from Helicobacter pylori (strain ATCC 700392 / 26695) (Campylobacter pylori).